The chain runs to 420 residues: uncharacterized protein (420 aa).

One can recognise a VWFA domain in the interval 43–215 (NLCLVLDHSG…HTFRQLFQRM (173 aa)). The disordered stretch occupies residues 389-420 (LQSGEDLSEGDRKKTRMVSKTTLQPPSAPSEH).

This is an uncharacterized protein from Synechocystis sp. (strain ATCC 27184 / PCC 6803 / Kazusa).